A 301-amino-acid chain; its full sequence is Probable alpha-L-glutamate ligase (301 aa).

Residues 104–287 (MQLLSRKGIG…VAGLIIDFIE (184 aa)) enclose the ATP-grasp domain. ATP contacts are provided by residues K141, 178 to 179 (EF), D187, and 211 to 213 (RSN). The Mg(2+) site is built by D248, E260, and N262. D248, E260, and N262 together coordinate Mn(2+).

The protein belongs to the RimK family. Mg(2+) is required as a cofactor. Mn(2+) serves as cofactor.

The sequence is that of Probable alpha-L-glutamate ligase from Aliivibrio fischeri (strain MJ11) (Vibrio fischeri).